Reading from the N-terminus, the 1165-residue chain is Adhesion G-protein coupled receptor G6 (1165 aa).

A signal peptide spans 1-30 (MMFDTLGKRCCPWRLKPSALLFLFVLCVTC). Topologically, residues 31–832 (VPLSVCGCGS…ASQIDGRNTK (802 aa)) are extracellular. Cys-41 and Cys-67 form a disulfide bridge. The CUB domain occupies 41-149 (CRLVLSNPSG…KGFNASYIRV (109 aa)). Positions 89 and 97 each coordinate Ca(2+). A disulfide bridge connects residues Cys-94 and Cys-111. Asn-121 carries N-linked (GlcNAc...) asparagine glycosylation. Asp-134, Ser-136, and Ile-137 together coordinate Ca(2+). A glycan (N-linked (GlcNAc...) asparagine) is linked at Asn-143. The Pentraxin (PTX) domain occupies 154-356 (RNQKVILPQT…ALKAEGNLSC (203 aa)). 2 disulfides stabilise this stretch: Cys-186-Cys-254 and Cys-231-Cys-277. Residues Asn-258, Asn-314, Asn-324, Asn-353, Asn-370, Asn-410, Asn-417, Asn-424, Asn-458, Asn-462, and Asn-478 are each glycosylated (N-linked (GlcNAc...) asparagine). Residues 446–807 (DKRLVLWALL…LDAGETICLC (362 aa)) are mediates interaction with laminin-2. 2 cysteine pairs are disulfide-bonded: Cys-498/Cys-533 and Cys-521/Cys-550. 10 N-linked (GlcNAc...) asparagine glycosylation sites follow: Asn-536, Asn-549, Asn-563, Asn-570, Asn-665, Asn-674, Asn-720, Asn-746, Asn-781, and Asn-788. Residues 640–823 (PHVNIETQNL…GVLMDLPRSA (184 aa)) form the GAIN-B domain. 2 cysteine pairs are disulfide-bonded: Cys-773/Cys-805 and Cys-792/Cys-807. Positions 773–823 (CAFWDMNKNKSFGGWNTSGCVAHSDLDAGETICLCSHFTHFGVLMDLPRSA) are GPS. A stachel region spans residues 812-820 (HFGVLMDLP). Residues 833-853 (VLTFITYIGCGISAIFSAATL) form a helical membrane-spanning segment. Residues 854 to 873 (LTYVAFEKLRRDYPSKILMN) lie on the Cytoplasmic side of the membrane. A helical membrane pass occupies residues 874 to 894 (LSSALLFLNLIFLLDGWVTSF). The Extracellular portion of the chain corresponds to 895–899 (GVAGL). Residues 900–920 (CTAVAALLHFFLLATFTWMGL) traverse the membrane as a helical segment. Residues 921-940 (EAIHMYIALVKVFNTYIHRY) lie on the Cytoplasmic side of the membrane. Residues 941 to 961 (ILKFCIIGWGLPALVVSIILV) traverse the membrane as a helical segment. Over 962 to 994 (SRRQNEVYGKESYGKDQDDEFCWIQDPVVFYVS) the chain is Extracellular. The helical transmembrane segment at 995–1015 (CAGYFGVMFFLNVAMFIVVMV) threads the bilayer. The Cytoplasmic segment spans residues 1016–1039 (QICGRNGKRSNRTLREEVLRNLRS). The chain crosses the membrane as a helical span at residues 1040 to 1060 (VVSLTFLLGMTWGFAFFAWGP). Residues 1061–1062 (LN) are Extracellular-facing. A helical transmembrane segment spans residues 1063 to 1083 (IPFMYLFSIFNSLQGLFIFIF). Asn-1073 serves as a coordination point for 17alpha-hydroxyprogesterone. Over 1084–1165 (HCAMKENVQK…KRNSHSDNFS (82 aa)) the chain is Cytoplasmic. Positions 1126 to 1154 (NLGKSLSSSSIGSNSTYLTSKSKSSSTTY) are enriched in low complexity. The tract at residues 1126–1165 (NLGKSLSSSSIGSNSTYLTSKSKSSSTTYFKRNSHSDNFS) is disordered. 2 positions are modified to phosphoserine: Ser-1135 and Ser-1138.

This sequence belongs to the G-protein coupled receptor 2 family. Adhesion G-protein coupled receptor (ADGR) subfamily. In terms of assembly, heterodimer of 2 chains generated by proteolytic processing; the large extracellular N-terminal fragment and the membrane-bound C-terminal fragment predominantly remain associated and non-covalently linked. Interacts with Laminin-2; this interaction stabilizes the receptor in an inactive state. Laminin-2 polymerization could facilitate ADGRG6-NTF removal, thereby exposing the tethered agonist to drive myelination. Interacts with PRNP. Interacts with ITGB1. Interacts with LRP1. Proteolytically cleaved into 2 conserved sites: one in the GPS region of the GAIN-B domain (S1 site) and the other in the middle of the extracellular domain (S2 site). The proteolytic cleavage at S1 site generates an extracellular subunit and a seven-transmembrane subunit. Furin is involved in the cleavage of the S2 site generating a soluble fragment. Processing at the GPS region occurred independent of and probably prior to the cleavage at the S2 site. Proteolytic cleavage is required for activation of the receptor. Expressed at high levels in the heart, somite and otic vesicle during embryogenesis and in adult lung.

Its subcellular location is the cell membrane. Forms a heterodimer of 2 chains generated by proteolytic processing that remain associated through non-covalent interactions mediated by the GAIN-B domain. In the inactivated receptor, the Stachel sequence (also named stalk) is embedded in the GAIN-B domain, where it adopts a beta-strand conformation. On activation, the Stachel moves into the 7 transmembrane region and adopts a twisted hook-shaped configuration that forms contacts within the receptor, leading to coupling of a G-alpha protein, which activates signaling. The cleaved GAIN-B and N-terminal domains can then dissociate from the rest of the receptor. Functionally, adhesion G-protein coupled receptor (aGPCR) for steroid hormones, such as progesterone and 17alpha-hydroxyprogesterone (17OHP). Involved in many biological processes, such as myelination, sprouting angiogenesis, placenta, ear and cartilage development. Ligand binding causes a conformation change that triggers signaling via guanine nucleotide-binding proteins (G proteins) and modulates the activity of downstream effectors, such as adenylate cyclase. ADGRG6 is coupled to G(i) G alpha proteins and mediates inhibition of adenylate cyclase. Also able to couple to G(q) G proteins. Involved in myelination of the peripheral nervous system: required for differentiation of promyelinating Schwann cells and for normal myelination of axons. Also acts as a regulator of body length and bone mass. Acts as a regulator of blood-brain barrier formation in the central nervous system vie its association with LRP1 and ITGB1. The protein is Adhesion G-protein coupled receptor G6 of Mus musculus (Mouse).